Here is a 403-residue protein sequence, read N- to C-terminus: Golgin-45 (403 aa).

Positions 1–63 are disordered; the sequence is MEKMTTLKSS…PRKKVSSDSP (63 aa). A Tankyrase-binding motif motif is present at residues 22 to 26; sequence RGAGD. At serine 53 the chain carries Phosphoserine. A coiled-coil region spans residues 123–216; sequence RKELSEVKKV…QLERMSIQCD (94 aa). At serine 356 the chain carries Phosphoserine. The essential for interaction with GORASP2 stretch occupies residues 397–403; it reads QGELIAL.

As to quaternary structure, interacts with GORASP2. Interacts with the GTP-bound form of RAB2, but not with other Golgi Rab proteins. Identified in a complex with RAB2 and GORASP2. In terms of processing, ADP-ribosylated by tankyrase TNKS and TNKS2. Poly-ADP-ribosylated protein is recognized by RNF146, followed by ubiquitination. Ubiquitinated by RNF146 when poly-ADP-ribosylated, leading to its degradation.

It localises to the golgi apparatus membrane. Functionally, required for normal Golgi structure and for protein transport from the endoplasmic reticulum (ER) through the Golgi apparatus to the cell surface. The chain is Golgin-45 (Blzf1) from Mus musculus (Mouse).